The sequence spans 505 residues: uncharacterized protein (505 aa).

In terms of domain architecture, Radical SAM core spans 193-440 (CTNKKCNLCE…LEIKKKYIGR (248 aa)). [4Fe-4S] cluster-binding residues include Cys-208, Cys-216, and Cys-219. Residues 435–499 (KKYIGRVLEV…EKYLEGRILK (65 aa)) form the TRAM domain.

Requires [4Fe-4S] cluster as cofactor.

This is an uncharacterized protein from Methanocaldococcus jannaschii (strain ATCC 43067 / DSM 2661 / JAL-1 / JCM 10045 / NBRC 100440) (Methanococcus jannaschii).